A 407-amino-acid polypeptide reads, in one-letter code: Na(+)-translocating NADH-quinone reductase subunit F (407 aa).

The chain crosses the membrane as a helical span at residues 3–23 (IILGVVMFTLIVLALVLVILF). The region spanning 32–126 (GDITISINGD…DMDIELPEEI (95 aa)) is the 2Fe-2S ferredoxin-type domain. Cys-69, Cys-75, Cys-78, and Cys-110 together coordinate [2Fe-2S] cluster. In terms of domain architecture, FAD-binding FR-type spans 129-269 (VKKWECTVIS…SGPFGEFFAK (141 aa)). The catalytic stretch occupies residues 272–389 (DAEMVFIGGG…PMMNAAVIGM (118 aa)).

The protein belongs to the NqrF family. As to quaternary structure, composed of six subunits; NqrA, NqrB, NqrC, NqrD, NqrE and NqrF. [2Fe-2S] cluster serves as cofactor. It depends on FAD as a cofactor.

The protein resides in the cell inner membrane. It carries out the reaction a ubiquinone + n Na(+)(in) + NADH + H(+) = a ubiquinol + n Na(+)(out) + NAD(+). In terms of biological role, NQR complex catalyzes the reduction of ubiquinone-1 to ubiquinol by two successive reactions, coupled with the transport of Na(+) ions from the cytoplasm to the periplasm. The first step is catalyzed by NqrF, which accepts electrons from NADH and reduces ubiquinone-1 to ubisemiquinone by a one-electron transfer pathway. This Vibrio anguillarum (Listonella anguillarum) protein is Na(+)-translocating NADH-quinone reductase subunit F.